Reading from the N-terminus, the 214-residue chain is ATP-dependent Clp protease proteolytic subunit 2 (214 aa).

Catalysis depends on serine 110, which acts as the Nucleophile. The active site involves histidine 135.

This sequence belongs to the peptidase S14 family. Fourteen ClpP subunits assemble into 2 heptameric rings which stack back to back to give a disk-like structure with a central cavity, resembling the structure of eukaryotic proteasomes.

It is found in the cytoplasm. It catalyses the reaction Hydrolysis of proteins to small peptides in the presence of ATP and magnesium. alpha-casein is the usual test substrate. In the absence of ATP, only oligopeptides shorter than five residues are hydrolyzed (such as succinyl-Leu-Tyr-|-NHMec, and Leu-Tyr-Leu-|-Tyr-Trp, in which cleavage of the -Tyr-|-Leu- and -Tyr-|-Trp bonds also occurs).. In terms of biological role, cleaves peptides in various proteins in a process that requires ATP hydrolysis. Has a chymotrypsin-like activity. Plays a major role in the degradation of misfolded proteins. This chain is ATP-dependent Clp protease proteolytic subunit 2, found in Mycobacterium leprae (strain TN).